A 269-amino-acid polypeptide reads, in one-letter code: Phosphatidylglycerol--prolipoprotein diacylglyceryl transferase (269 aa).

4 helical membrane passes run 14 to 34 (IVQIGGFAVRWYSLLILAGII), 49 to 69 (VAPEVLSDLVVWLVVGAIPMA), 89 to 109 (VFAIWEGGIAIHGAILGGLLA), and 118 to 138 (GYSLLTMIDLAAPGLILGQAI). Residue R140 participates in a 1,2-diacyl-sn-glycero-3-phospho-(1'-sn-glycerol) binding. Transmembrane regions (helical) follow at residues 180 to 200 (TFLYESLWNLGVLALLLFVFF), 208 to 228 (GSIACLYALAYSVGRFWIEGL), and 240 to 260 (TAQLVSLAGIVLGAVGLWWLN).

It belongs to the Lgt family.

The protein resides in the cell inner membrane. The enzyme catalyses L-cysteinyl-[prolipoprotein] + a 1,2-diacyl-sn-glycero-3-phospho-(1'-sn-glycerol) = an S-1,2-diacyl-sn-glyceryl-L-cysteinyl-[prolipoprotein] + sn-glycerol 1-phosphate + H(+). The protein operates within protein modification; lipoprotein biosynthesis (diacylglyceryl transfer). Its function is as follows. Catalyzes the transfer of the diacylglyceryl group from phosphatidylglycerol to the sulfhydryl group of the N-terminal cysteine of a prolipoprotein, the first step in the formation of mature lipoproteins. The polypeptide is Phosphatidylglycerol--prolipoprotein diacylglyceryl transferase (Gloeobacter violaceus (strain ATCC 29082 / PCC 7421)).